Reading from the N-terminus, the 93-residue chain is Small ribosomal subunit protein bS6 (93 aa).

The protein belongs to the bacterial ribosomal protein bS6 family.

Functionally, binds together with bS18 to 16S ribosomal RNA. The chain is Small ribosomal subunit protein bS6 from Treponema denticola (strain ATCC 35405 / DSM 14222 / CIP 103919 / JCM 8153 / KCTC 15104).